Reading from the N-terminus, the 212-residue chain is Peptide methionine sulfoxide reductase MsrA (212 aa).

The active site involves Cys-52.

This sequence belongs to the MsrA Met sulfoxide reductase family.

The enzyme catalyses L-methionyl-[protein] + [thioredoxin]-disulfide + H2O = L-methionyl-(S)-S-oxide-[protein] + [thioredoxin]-dithiol. It catalyses the reaction [thioredoxin]-disulfide + L-methionine + H2O = L-methionine (S)-S-oxide + [thioredoxin]-dithiol. Has an important function as a repair enzyme for proteins that have been inactivated by oxidation. Catalyzes the reversible oxidation-reduction of methionine sulfoxide in proteins to methionine. This is Peptide methionine sulfoxide reductase MsrA from Escherichia fergusonii (strain ATCC 35469 / DSM 13698 / CCUG 18766 / IAM 14443 / JCM 21226 / LMG 7866 / NBRC 102419 / NCTC 12128 / CDC 0568-73).